We begin with the raw amino-acid sequence, 490 residues long: GTPase Der (490 aa).

EngA-type G domains follow at residues 1 to 165 (MRIA…QIPV) and 227 to 400 (LKVA…TIAT). GTP-binding positions include 7–14 (GRPNVGKS), 54–58 (DTGGV), 117–120 (NKAD), 233–240 (GHPNVGKS), 280–284 (DTAGL), and 345–348 (NKWD). The KH-like domain maps to 401–485 (TKLSTSLVNK…PFDLEYKAKP (85 aa)).

This sequence belongs to the TRAFAC class TrmE-Era-EngA-EngB-Septin-like GTPase superfamily. EngA (Der) GTPase family. Associates with the 50S ribosomal subunit.

GTPase that plays an essential role in the late steps of ribosome biogenesis. This Chlamydia trachomatis serovar L2b (strain UCH-1/proctitis) protein is GTPase Der.